The sequence spans 594 residues: MIMSDRLTAFKELIQAGGAKRPADLIIKNGQLVNVMTAEIYPAEVAIYQGKIVAVDPDVSAYQGTETRVIDAKQQYIVPGLIDGHIHVECSKLSMTSFAEAVVPHGTTSIISGLDEYISVIGVDGLSEIFKEVDQLPMRVFWGAPFKTPYTIPASTIADNIDSTVQAQLQKRSDVYGVWETVREAVETLDEDTLKTLLNAQDNHVPVWGCAPMATGTKLNEYLMSGVRVDHESYDHQELLEKVRKGINVVIRESSVTHFLAENIRAITETNGQIARHVSFCTDDVNAMDIVNKGHLDHLVRLAIAAGVAPMTAIQMATINSAEAYRIDDQVGLIAPGRNADILLVSDLEAFEIKRVLAKGQPVATDGHINQSIERPVRPASLANTIIREAVQASDFEYHVAADASQVTVQTIASEGPFVRHAKTKTLTVEDGIVQIDPAKDVALISVLERFGKNGNQSLGFTSGWTLKKGAMASTAAPDDNNIIVMGVNPDDMALAVNTLIERDGGQVVVADGQILSFLPLPIAGIVSDVTPAELAVQEEGILKASQAIGSEVVDPMFYMTFLPITAIPDLAITDLGNVDCNELRLFDPILTIQ.

The protein belongs to the metallo-dependent hydrolases superfamily. Adenine deaminase family. The cofactor is Mn(2+).

It catalyses the reaction adenine + H2O + H(+) = hypoxanthine + NH4(+). In Latilactobacillus sakei subsp. sakei (strain 23K) (Lactobacillus sakei subsp. sakei), this protein is Adenine deaminase 1.